A 623-amino-acid polypeptide reads, in one-letter code: Stretch-activated cation channel MID1 (623 aa).

At 1 to 57 the chain is on the extracellular side; it reads MPAREVYLKRPATRRQLEGICTRYDGQQRITQLDCEEGCSKRTQPPQRLNPRYKSPD. The chain crosses the membrane as a helical span at residues 58–78; the sequence is LIHISFIIVLLCILSMTSSVV. Over 79-623 the chain is Cytoplasmic; sequence AQTTTGSSSS…DRWGNRWCNG (545 aa). Low complexity predominate over residues 524–536; it reads TSTSSGTFPTPST. The segment at 524–544 is disordered; it reads TSTSSGTFPTPSTVLRTPSSP. Residues 600-623 are required for targeting to the cell membrane; sequence SYGDGSAAQGVAAQDRWGNRWCNG.

As to quaternary structure, forms an oligomer by disulfide bonds. Interacts with CCH1 to form a Ca(2+) influx channel. Interacts (via C-terminus) with CCP1/cytochrome c peroxidase; the interaction may contribute to cellular detoxification of radicals.

It is found in the cell membrane. In terms of biological role, calcium-permeable, cation-selective stretch-activated channel (SAC) that functions together with CCH1 to mediate calcium entry into cells. May additionally play a role in cellular detoxification of radicals. This is Stretch-activated cation channel MID1 from Cryptococcus neoformans var. grubii serotype A (strain H99 / ATCC 208821 / CBS 10515 / FGSC 9487) (Filobasidiella neoformans var. grubii).